Here is a 312-residue protein sequence, read N- to C-terminus: Non-structural protein 12A (312 aa).

The segment covering M1–G23 has biased composition (low complexity). Disordered stretches follow at residues M1–V37, F62–N97, and S112–T159. Residues V63–L73 show a composition bias toward basic and acidic residues. The segment covering K74–N97 has biased composition (polar residues). The span at D122 to Q134 shows a compositional bias: basic and acidic residues. Polar residues predominate over residues E135–R154.

The protein belongs to the phytoreovirus non-structural protein Pns12A family.

It is found in the host cytoplasm. Its function is as follows. Constituent of viral factories. This Rice dwarf virus (isolate O) (RDV) protein is Non-structural protein 12A.